The chain runs to 436 residues: 3-ketoacyl-CoA thiolase (436 aa).

C99 acts as the Acyl-thioester intermediate in catalysis. Residues H392 and C422 each act as proton acceptor in the active site.

The protein belongs to the thiolase-like superfamily. Thiolase family. Heterotetramer of two alpha chains (FadJ) and two beta chains (FadI).

The protein resides in the cytoplasm. It carries out the reaction an acyl-CoA + acetyl-CoA = a 3-oxoacyl-CoA + CoA. The protein operates within lipid metabolism; fatty acid beta-oxidation. Catalyzes the final step of fatty acid oxidation in which acetyl-CoA is released and the CoA ester of a fatty acid two carbons shorter is formed. The protein is 3-ketoacyl-CoA thiolase of Shewanella baltica (strain OS155 / ATCC BAA-1091).